The sequence spans 244 residues: Small ribosomal subunit protein uS3 (244 aa).

The region spanning 39 to 107 (VREMLRKKLA…PAHINVTEVR (69 aa)) is the KH type-2 domain. The disordered stretch occupies residues 213-244 (VGQEKQDDSPRNDRNDRGDRGDRPSRPAREAR). The segment covering 216–244 (EKQDDSPRNDRNDRGDRGDRPSRPAREAR) has biased composition (basic and acidic residues).

The protein belongs to the universal ribosomal protein uS3 family. Part of the 30S ribosomal subunit. Forms a tight complex with proteins S10 and S14.

In terms of biological role, binds the lower part of the 30S subunit head. Binds mRNA in the 70S ribosome, positioning it for translation. This Xanthomonas euvesicatoria pv. vesicatoria (strain 85-10) (Xanthomonas campestris pv. vesicatoria) protein is Small ribosomal subunit protein uS3.